The sequence spans 157 residues: Class-10 pathogenesis-related protein 1 (157 aa).

It belongs to the BetVI family. As to expression, high levels in roots and not detectable in hypocotyls, cotyledons, stems, leaves and flower buds of untreated plants. After induction, high levels are present in the vascular bundles of leaves.

Its subcellular location is the cytoplasm. The sequence is that of Class-10 pathogenesis-related protein 1 (MSPR10-1) from Medicago sativa (Alfalfa).